The sequence spans 140 residues: Tumor protein D55 (140 aa).

Residues 1–28 (MPHARTETSVGTYESHSTSELEDLTEPE) form a disordered region. Residues 7–18 (ETSVGTYESHST) show a composition bias toward polar residues. The stretch at 28-57 (EQRELKTKLTKLEAEIVTLRHVLAAKERRC) forms a coiled coil.

This sequence belongs to the TPD52 family. Interacts with TPD52L2. As to expression, specifically expressed in testis. Expressed at 5.6-fold higher levels in adult testis than in fetal testis.

The polypeptide is Tumor protein D55 (TPD52L3) (Homo sapiens (Human)).